Reading from the N-terminus, the 328-residue chain is tRNA uridine(34) hydroxylase (328 aa).

Residues 130–224 (LDKDTVVLDT…YGKDPEVQGE (95 aa)) form the Rhodanese domain. C184 functions as the Cysteine persulfide intermediate in the catalytic mechanism.

The protein belongs to the TrhO family.

The catalysed reaction is uridine(34) in tRNA + AH2 + O2 = 5-hydroxyuridine(34) in tRNA + A + H2O. Functionally, catalyzes oxygen-dependent 5-hydroxyuridine (ho5U) modification at position 34 in tRNAs. The chain is tRNA uridine(34) hydroxylase from Streptococcus pneumoniae serotype 19F (strain G54).